A 470-amino-acid polypeptide reads, in one-letter code: Nuclear receptor ROR-beta (470 aa).

The segment at residues 18–93 (VIPCKICGDK…LGMSRDAVKF (76 aa)) is a DNA-binding region (nuclear receptor). 2 consecutive NR C4-type zinc fingers follow at residues 21–41 (CKIC…CEGC) and 57–81 (CPRQ…LQKC). Basic and acidic residues predominate over residues 104–117 (LYAEVQKHQQRLQE). The tract at residues 104-127 (LYAEVQKHQQRLQEQRQQQSGEAE) is disordered. The 239-residue stretch at 222–460 (EIDRIAQNII…TLFPPLYKEL (239 aa)) folds into the NR LBD domain. The short motif at 456-461 (LYKELF) is the AF-2 element.

Belongs to the nuclear hormone receptor family. NR1 subfamily. As to quaternary structure, monomer. Interacts with CRX.

It is found in the nucleus. Its subcellular location is the nucleoplasm. In terms of biological role, nuclear receptor that binds DNA as a monomer to ROR response elements (RORE) containing a single core motif half-site 5'-AGGTCA-3' preceded by a short A-T-rich sequence. Considered to have intrinsic transcriptional activity, have some natural ligands such as all-trans retinoic acid (ATRA) and other retinoids which act as inverse agonists repressing the transcriptional activity. Required for normal postnatal development of rod and cone photoreceptor cells. Modulates rod photoreceptors differentiation at least by inducing the transcription factor NRL-mediated pathway. In cone photoreceptor cells, regulates transcription of OPN1SW. Involved in the regulation of the period length and stability of the circadian rhythm. May control cytoarchitectural patterning of neocortical neurons during development. May act in a dose-dependent manner to regulate barrel formation upon innervation of layer IV neurons by thalamocortical axons. May play a role in the suppression of osteoblastic differentiation through the inhibition of RUNX2 transcriptional activity. Its function is as follows. Isoform 1 is critical for hindlimb motor control and for the differentiation of amacrine and horizontal cells in the retina. Regulates the expression of PTF1A synergistically with FOXN4. The sequence is that of Nuclear receptor ROR-beta (RORB) from Homo sapiens (Human).